The sequence spans 103 residues: Large ribosomal subunit protein bL21 (103 aa).

The protein belongs to the bacterial ribosomal protein bL21 family. Part of the 50S ribosomal subunit. Contacts protein L20.

Functionally, this protein binds to 23S rRNA in the presence of protein L20. This is Large ribosomal subunit protein bL21 from Legionella pneumophila (strain Lens).